Here is a 189-residue protein sequence, read N- to C-terminus: UPF0398 protein BH1768 (189 aa).

It belongs to the UPF0398 family.

This chain is UPF0398 protein BH1768, found in Halalkalibacterium halodurans (strain ATCC BAA-125 / DSM 18197 / FERM 7344 / JCM 9153 / C-125) (Bacillus halodurans).